Reading from the N-terminus, the 151-residue chain is Putative pre-16S rRNA nuclease (151 aa).

It belongs to the YqgF nuclease family.

The protein localises to the cytoplasm. Its function is as follows. Could be a nuclease involved in processing of the 5'-end of pre-16S rRNA. The protein is Putative pre-16S rRNA nuclease of Methylococcus capsulatus (strain ATCC 33009 / NCIMB 11132 / Bath).